We begin with the raw amino-acid sequence, 317 residues long: Mitochondrial outer membrane protein porin 4 (317 aa).

A disordered region spans residues 1–30 (MEAETECKVPGVYSETGIPVEDPAPGLNSD).

It belongs to the eukaryotic mitochondrial porin (TC 1.B.8.1) family.

It localises to the mitochondrion outer membrane. Its function is as follows. Forms a channel through the mitochondrial outer membrane that allows diffusion of small hydrophilic molecules. The channel adopts an open conformation at low or zero membrane potential and a closed conformation at potentials above 30-40 mV. The open state has a weak anion selectivity whereas the closed state is cation-selective. The polypeptide is Mitochondrial outer membrane protein porin 4 (VDAC4) (Oryza sativa subsp. japonica (Rice)).